The primary structure comprises 387 residues: BTB and MATH domain-containing protein 38 (387 aa).

An MATH domain is found at 79 to 204; sequence EGMLKLEIPN…NEMVTVTARV (126 aa). The BTB domain occupies 228 to 295; the sequence is CDMTLVINKQ…IYPCHKPITS (68 aa).

This Caenorhabditis elegans protein is BTB and MATH domain-containing protein 38 (bath-38).